The primary structure comprises 108 residues: Resistin (108 aa).

An N-terminal signal peptide occupies residues 1-18 (MKALCLLLLPVLGLLVSS). 5 cysteine pairs are disulfide-bonded: C51-C104, C63-C103, C72-C89, C74-C91, and C78-C93.

Belongs to the resistin/FIZZ family. In terms of assembly, homodimer; disulfide-linked. Interacts with DEFA1. In terms of tissue distribution, expressed in white adipose tissue (at protein level). Widely expressed, with particularly strong expression in lung, bone marrow, breast and peripheral blood. Expressed strongly in bone marrow and at lower levels in lung, but not detected in other tissues. Isoform 2 is detected in adipose tissue, bone marrow, brain, lung, peripheral blood, placenta and thymus.

Its subcellular location is the secreted. Hormone that seems to suppress insulin ability to stimulate glucose uptake into adipose cells. Potentially links obesity to diabetes. Promotes chemotaxis in myeloid cells. This Homo sapiens (Human) protein is Resistin (RETN).